Reading from the N-terminus, the 380-residue chain is Chorismate synthase (380 aa).

NADP(+) is bound by residues R48 and R53. FMN-binding positions include 126-128 (RAS), G284, 299-303 (KPTSS), and R326.

The protein belongs to the chorismate synthase family. FMNH2 serves as cofactor.

It carries out the reaction 5-O-(1-carboxyvinyl)-3-phosphoshikimate = chorismate + phosphate. Its pathway is metabolic intermediate biosynthesis; chorismate biosynthesis; chorismate from D-erythrose 4-phosphate and phosphoenolpyruvate: step 7/7. Catalyzes the anti-1,4-elimination of the C-3 phosphate and the C-6 proR hydrogen from 5-enolpyruvylshikimate-3-phosphate (EPSP) to yield chorismate, which is the branch point compound that serves as the starting substrate for the three terminal pathways of aromatic amino acid biosynthesis. This reaction introduces a second double bond into the aromatic ring system. This chain is Chorismate synthase, found in Ignicoccus hospitalis (strain KIN4/I / DSM 18386 / JCM 14125).